We begin with the raw amino-acid sequence, 410 residues long: Arginine deiminase (410 aa).

The Amidino-cysteine intermediate role is filled by C400.

The protein belongs to the arginine deiminase family.

The protein resides in the cytoplasm. The enzyme catalyses L-arginine + H2O = L-citrulline + NH4(+). The protein operates within amino-acid degradation; L-arginine degradation via ADI pathway; carbamoyl phosphate from L-arginine: step 1/2. This Levilactobacillus brevis (strain ATCC 367 / BCRC 12310 / CIP 105137 / JCM 1170 / LMG 11437 / NCIMB 947 / NCTC 947) (Lactobacillus brevis) protein is Arginine deiminase.